We begin with the raw amino-acid sequence, 31 residues long: Nemertide alpha-4 (31 aa).

3 cysteine pairs are disulfide-bonded: Cys2/Cys16, Cys9/Cys20, and Cys15/Cys26. A 4-hydroxyproline mark is found at Pro28 and Pro29.

It belongs to the nemertide family. As to expression, confined to the epidermis and to the mucus layer.

Its subcellular location is the secreted. Its function is as follows. Potent toxin, demonstrating strong inhibitory effects on insect sodium channels (Nav) and reduced activity on mammalian sodium channels. Potently inhibits inactivation of insect sodium channels of B.germanica (BgNav1) (EC(50)=11.1 nM). Also delays the inactivation of most mammalian Nav (human Nav1.1/SCN1A; EC(50)=92 nM, rat Nav1.2/SCN2A; EC(50)=134.2 nM, rat Nav1.3/SCN3A; EC(50)=12.9 nM, rat Nav1.4/SCN4A; EC(50)=14.6 nM, human Nav1.5/SCN5A; EC(50)=27.8 nM, mouse Nav1.6/SCN8A; EC(50)=123.6 nM, human Nav1.9/SCN9A; EC(50)=80.5 nM). Inactivation is completely prevented by a concentration of 1 uM, resulting in sustained, non-inactivating currents. In addition, the toxin significantly enhances the recovery from inactivation, and the open state is not required for the toxin to interact with the channel. In vivo, injection into brine shrimp (Artemia salina) stops movement or causes death after 24 hours (EC(50)=0.4 uM). This chain is Nemertide alpha-4, found in Lineus sanguineus (Ribbon worm).